The primary structure comprises 259 residues: Probable ATP-dependent transporter ycf16 (259 aa).

The 245-residue stretch at 9–253 folds into the ABC transporter domain; it reads LEVKNLKAQV…EIKGYDWLNE (245 aa). Residue 41–48 coordinates ATP; that stretch reads GPNGSGKS.

It belongs to the ABC transporter superfamily. Ycf16 family.

It localises to the plastid. Its subcellular location is the cyanelle. The sequence is that of Probable ATP-dependent transporter ycf16 (ycf16) from Cyanophora paradoxa.